The primary structure comprises 220 residues: MAKSALVWLASVCLVFNILSLPFLALGLSSCGGSCQTLNDYEGQLICINGECNDDPEVGTHICGGNSSTPSPPPPSTCQPSGTLACKGGKPKNTYTCSPPITSSTPAVLTNNNFEKGGDGGGPSACDNKYHDNSERIVALSTGWYNGGSRCGKMIRITAQNGRSVLAKVVDECDSMHGCDKEHAGQPPCDNNIVDGSNAVWNALGLDINIGEVDVTWSMA.

The signal sequence occupies residues 1-27; sequence MAKSALVWLASVCLVFNILSLPFLALG.

The protein belongs to the kiwellin family. As to expression, expressed in ripening fruits.

The protein localises to the secreted. The protein is Ripening-related protein grip22 (grip22) of Vitis vinifera (Grape).